Here is a 116-residue protein sequence, read N- to C-terminus: Prefoldin subunit beta (116 aa).

This sequence belongs to the prefoldin subunit beta family. Heterohexamer of two alpha and four beta subunits.

Its subcellular location is the cytoplasm. Functionally, molecular chaperone capable of stabilizing a range of proteins. Seems to fulfill an ATP-independent, HSP70-like function in archaeal de novo protein folding. This Thermococcus onnurineus (strain NA1) protein is Prefoldin subunit beta.